The following is a 460-amino-acid chain: tRNA (guanine(37)-N(1))-methyltransferase (460 aa).

Residues His-204, 243 to 244 (DL), 271 to 272 (DA), and Asn-292 contribute to the S-adenosyl-L-methionine site. A compositionally biased stretch (low complexity) spans 390–428 (ASTTTTPTTSNTNTSTTTSTTSTSTTTTESTNTNNSANN). The segment at 390–460 (ASTTTTPTTS…SIDTNKKLKN (71 aa)) is disordered. Residues 442 to 451 (DSNETNETDS) are compositionally biased toward acidic residues.

This sequence belongs to the class I-like SAM-binding methyltransferase superfamily. TRM5/TYW2 family. Monomer.

It localises to the mitochondrion matrix. The protein localises to the nucleus. The protein resides in the cytoplasm. The enzyme catalyses guanosine(37) in tRNA + S-adenosyl-L-methionine = N(1)-methylguanosine(37) in tRNA + S-adenosyl-L-homocysteine + H(+). Specifically methylates the N1 position of guanosine-37 in various cytoplasmic and mitochondrial tRNAs. Methylation is not dependent on the nature of the nucleoside 5' of the target nucleoside. This is the first step in the biosynthesis of wybutosine (yW), a modified base adjacent to the anticodon of tRNAs and required for accurate decoding. The chain is tRNA (guanine(37)-N(1))-methyltransferase (trmt5) from Dictyostelium discoideum (Social amoeba).